The chain runs to 940 residues: UvrABC system protein A (940 aa).

32-39 provides a ligand contact to ATP; it reads GLSGSGKS. A C4-type zinc finger spans residues 252 to 279; the sequence is CIDCGISIDEISPRLFSFNSPFGKCDYC. ABC transporter domains follow at residues 309-589 and 609-937; these read WANT…EGSL and SNGK…HYLK. 641–648 serves as a coordination point for ATP; that stretch reads GVSGSGKS. The C4-type zinc finger occupies 740–766; it reads CEACKGDGIIKIEMQFLSDVYVPCEIC.

This sequence belongs to the ABC transporter superfamily. UvrA family. In terms of assembly, forms a heterotetramer with UvrB during the search for lesions.

Its subcellular location is the cytoplasm. Its function is as follows. The UvrABC repair system catalyzes the recognition and processing of DNA lesions. UvrA is an ATPase and a DNA-binding protein. A damage recognition complex composed of 2 UvrA and 2 UvrB subunits scans DNA for abnormalities. When the presence of a lesion has been verified by UvrB, the UvrA molecules dissociate. The chain is UvrABC system protein A from Clostridium tetani (strain Massachusetts / E88).